A 325-amino-acid polypeptide reads, in one-letter code: Diaminopimelate epimerase (325 aa).

Substrate is bound by residues Asn11 and Asn69. Cys78 functions as the Proton donor in the catalytic mechanism. Residues 79-80 (GN), Asn166, Asn203, and 221-222 (ER) contribute to the substrate site. Catalysis depends on Cys230, which acts as the Proton acceptor. 231-232 (GT) contacts substrate.

This sequence belongs to the diaminopimelate epimerase family. As to quaternary structure, homodimer.

The protein localises to the cytoplasm. It carries out the reaction (2S,6S)-2,6-diaminopimelate = meso-2,6-diaminopimelate. The protein operates within amino-acid biosynthesis; L-lysine biosynthesis via DAP pathway; DL-2,6-diaminopimelate from LL-2,6-diaminopimelate: step 1/1. Functionally, catalyzes the stereoinversion of LL-2,6-diaminopimelate (L,L-DAP) to meso-diaminopimelate (meso-DAP), a precursor of L-lysine and an essential component of the bacterial peptidoglycan. The protein is Diaminopimelate epimerase of Ligilactobacillus salivarius (strain UCC118) (Lactobacillus salivarius).